The sequence spans 956 residues: Probable hypoxanthine oxidase XdhD (956 aa).

Q414, F445, and A727 together coordinate Mo-molybdopterin.

It belongs to the xanthine dehydrogenase family. [2Fe-2S] cluster is required as a cofactor. It depends on Mo-molybdopterin as a cofactor.

Probably has no xanthine dehydrogenase activity; however deletion results in increased adenine sensitivity, suggesting that this protein contributes to the conversion of adenine to guanine nucleotides during purine salvage. The sequence is that of Probable hypoxanthine oxidase XdhD (xdhD) from Escherichia coli (strain K12).